The sequence spans 412 residues: Putative competence-damage inducible protein (412 aa).

The protein belongs to the CinA family.

This is Putative competence-damage inducible protein from Bacillus cereus (strain AH820).